Reading from the N-terminus, the 309-residue chain is Glutaminase (309 aa).

Residues Ser-65, Asn-117, Glu-162, Asn-169, Tyr-193, Tyr-245, and Val-263 each contribute to the substrate site.

The protein belongs to the glutaminase family. In terms of assembly, homotetramer.

The enzyme catalyses L-glutamine + H2O = L-glutamate + NH4(+). In Bacillus cytotoxicus (strain DSM 22905 / CIP 110041 / 391-98 / NVH 391-98), this protein is Glutaminase.